The chain runs to 399 residues: Lipoyl synthase, mitochondrial (399 aa).

The transit peptide at 1–30 (MRAVLELTRRRARNARFARARAVVGARARA) directs the protein to the mitochondrion. Residues 31–41 (ADAQELRDDSK) show a composition bias toward basic and acidic residues. The disordered stretch occupies residues 31 to 58 (ADAQELRDDSKGGSSVDKATSTAAEARE). [4Fe-4S] cluster contacts are provided by Cys131, Cys136, Cys142, Cys162, Cys166, Cys169, and Ser375. The Radical SAM core domain maps to 145 to 364 (GGDGKTATAT…QEIAEEMGFL (220 aa)).

Belongs to the radical SAM superfamily. Lipoyl synthase family. [4Fe-4S] cluster is required as a cofactor.

The protein resides in the mitochondrion. The enzyme catalyses [[Fe-S] cluster scaffold protein carrying a second [4Fe-4S](2+) cluster] + N(6)-octanoyl-L-lysyl-[protein] + 2 oxidized [2Fe-2S]-[ferredoxin] + 2 S-adenosyl-L-methionine + 4 H(+) = [[Fe-S] cluster scaffold protein] + N(6)-[(R)-dihydrolipoyl]-L-lysyl-[protein] + 4 Fe(3+) + 2 hydrogen sulfide + 2 5'-deoxyadenosine + 2 L-methionine + 2 reduced [2Fe-2S]-[ferredoxin]. The protein operates within protein modification; protein lipoylation via endogenous pathway; protein N(6)-(lipoyl)lysine from octanoyl-[acyl-carrier-protein]: step 2/2. Catalyzes the radical-mediated insertion of two sulfur atoms into the C-6 and C-8 positions of the octanoyl moiety bound to the lipoyl domains of lipoate-dependent enzymes, thereby converting the octanoylated domains into lipoylated derivatives. The chain is Lipoyl synthase, mitochondrial from Ostreococcus lucimarinus (strain CCE9901).